The following is a 1192-amino-acid chain: Chromosome partition protein Smc (1192 aa).

ATP is bound at residue 31–38 (PNGSGKSN). 4 coiled-coil regions span residues 164-197 (AGISRFKAKKVEAERRLERVQTNLTRLGDIVDEV), 234-292 (LTLS…RSEL), 333-369 (SAIADLRKTIAALEVAEAELADVQQKKESIAAKRDVE), and 396-464 (EHEA…DAKV). One can recognise an SMC hinge domain in the interval 522–636 (KDLVGIVADC…LVDTLATAIG (115 aa)). Coiled coils occupy residues 676–736 (RSEL…AKLH), 772–902 (ELAV…EREA), and 986–1030 (GSVN…INAD).

This sequence belongs to the SMC family. Homodimer.

The protein localises to the cytoplasm. In terms of biological role, required for chromosome condensation and partitioning. This Rhodopirellula baltica (strain DSM 10527 / NCIMB 13988 / SH1) protein is Chromosome partition protein Smc.